We begin with the raw amino-acid sequence, 573 residues long: DNA ligase (573 aa).

Glu-250 is an ATP binding site. Lys-252 serves as the catalytic N6-AMP-lysine intermediate. ATP-binding residues include Arg-257, Arg-272, Glu-301, Phe-342, Arg-432, and Lys-438.

It belongs to the ATP-dependent DNA ligase family. Mg(2+) serves as cofactor.

It catalyses the reaction ATP + (deoxyribonucleotide)n-3'-hydroxyl + 5'-phospho-(deoxyribonucleotide)m = (deoxyribonucleotide)n+m + AMP + diphosphate.. Functionally, DNA ligase that seals nicks in double-stranded DNA during DNA replication, DNA recombination and DNA repair. This Methanococcus maripaludis (strain DSM 14266 / JCM 13030 / NBRC 101832 / S2 / LL) protein is DNA ligase.